Here is a 707-residue protein sequence, read N- to C-terminus: Ornithine decarboxylase (707 aa).

Residues 83 to 102 (NRNPLSRADSAAGREETAQT) form a disordered region. Lysine 288 carries the N6-(pyridoxal phosphate)lysine modification. Pyridoxal 5'-phosphate contacts are provided by residues serine 421, glycine 458, and 498–501 (EPGR). 561–562 (FD) serves as a coordination point for substrate. Residue cysteine 634 is the Proton donor; shared with dimeric partner of the active site. Aspartate 635 lines the substrate pocket. Tyrosine 663 provides a ligand contact to pyridoxal 5'-phosphate.

Belongs to the Orn/Lys/Arg decarboxylase class-II family. As to quaternary structure, homodimer. Only the dimer is catalytically active, as the active sites are constructed of residues from both monomers. Pyridoxal 5'-phosphate is required as a cofactor.

The enzyme catalyses L-ornithine + H(+) = putrescine + CO2. It functions in the pathway amine and polyamine biosynthesis; putrescine biosynthesis via L-ornithine pathway; putrescine from L-ornithine: step 1/1. Its activity is regulated as follows. Inhibited by antizyme (AZ) in response to polyamine levels. AZ inhibits the assembly of the functional homodimer by binding to ODC monomers and targeting them for ubiquitin-independent proteolytic destruction by the 26S proteasome. Inhibited by 1-amino-oxy-3-aminopropane (APA, an isosteric analog of putrescine). Irreversibly inhibited by alpha-difluoromethylornithine (DFMO, a curative agent of West African sleeping sickness). Its function is as follows. Catalyzes the first and rate-limiting step of polyamine biosynthesis that converts ornithine into putrescine, which is the precursor for the polyamines, spermidine and spermine. Polyamines are essential for cell proliferation and are implicated in cellular processes, ranging from DNA replication to apoptosis. The polypeptide is Ornithine decarboxylase (Leishmania donovani).